A 277-amino-acid polypeptide reads, in one-letter code: Caspase-3 (277 aa).

M1 carries the N-acetylmethionine modification. 2 consecutive propeptides follow at residues 1 to 9 (MENNETSVD) and 10 to 28 (SKSI…KSMD). Residue K11 is modified to N6-acetyllysine. S26 is modified (phosphoserine). Active-site residues include H121 and C163. C163 is modified (S-nitrosocysteine; in inhibited form).

Belongs to the peptidase C14A family. As to quaternary structure, heterotetramer that consists of two anti-parallel arranged heterodimers, each one formed by a 17 kDa (p17) and a 12 kDa (p12) subunit. Interacts with BIRC6/bruce. In terms of processing, cleavage by granzyme B, caspase-6, caspase-8 and caspase-10 generates the two active subunits. Additional processing of the propeptides is likely due to the autocatalytic activity of the activated protease. Active heterodimers between the small subunit of caspase-7 protease and the large subunit of caspase-3 also occur and vice versa. Post-translationally, S-nitrosylated on its catalytic site cysteine in unstimulated cell lines and denitrosylated upon activation of the Fas apoptotic pathway, associated with an increase in intracellular caspase activity. Fas therefore activates caspase-3 not only by inducing the cleavage of the caspase zymogen to its active subunits, but also by stimulating the denitrosylation of its active site thiol. Ubiquitinated by BIRC6; this activity is inhibited by DIABLO/SMAC.

It localises to the cytoplasm. The catalysed reaction is Strict requirement for an Asp residue at positions P1 and P4. It has a preferred cleavage sequence of Asp-Xaa-Xaa-Asp-|- with a hydrophobic amino-acid residue at P2 and a hydrophilic amino-acid residue at P3, although Val or Ala are also accepted at this position.. Inhibited by BIRC6; following inhibition of BIRC6-caspase binding by DIABLO/SMAC, BIRC6 is subjected to caspase cleavage, leading to an increase in active caspases. Involved in the activation cascade of caspases responsible for apoptosis execution. At the onset of apoptosis, it proteolytically cleaves poly(ADP-ribose) polymerase PARP1 at a '216-Asp-|-Gly-217' bond. Cleaves and activates sterol regulatory element binding proteins (SREBPs) between the basic helix-loop-helix leucine zipper domain and the membrane attachment domain. Cleaves and activates caspase-6, -7 and -9 (CASP6, CASP7 and CASP9, respectively). Cleaves and inactivates interleukin-18 (IL18). Triggers cell adhesion in sympathetic neurons through RET cleavage. Cleaves IL-1 beta between an Asp and an Ala, releasing the mature cytokine which is involved in a variety of inflammatory processes. Cleaves and inhibits serine/threonine-protein kinase AKT1 in response to oxidative stress. Acts as an inhibitor of type I interferon production during virus-induced apoptosis by mediating cleavage of antiviral proteins CGAS, IRF3 and MAVS, thereby preventing cytokine overproduction. Also involved in pyroptosis by mediating cleavage and activation of gasdermin-E (GSDME). Cleaves XRCC4 and phospholipid scramblase proteins XKR4, XKR8 and XKR9, leading to promote phosphatidylserine exposure on apoptotic cell surface. Cleaves BIRC6 following inhibition of BIRC6-caspase binding by DIABLO/SMAC. The chain is Caspase-3 (CASP3) from Mesocricetus auratus (Golden hamster).